Here is a 486-residue protein sequence, read N- to C-terminus: Argininosuccinate lyase (486 aa).

It belongs to the lyase 1 family. Argininosuccinate lyase subfamily.

The protein resides in the cytoplasm. It catalyses the reaction 2-(N(omega)-L-arginino)succinate = fumarate + L-arginine. It participates in amino-acid biosynthesis; L-arginine biosynthesis; L-arginine from L-ornithine and carbamoyl phosphate: step 3/3. The chain is Argininosuccinate lyase from Acidobacterium capsulatum (strain ATCC 51196 / DSM 11244 / BCRC 80197 / JCM 7670 / NBRC 15755 / NCIMB 13165 / 161).